The sequence spans 120 residues: NAD(P)H-quinone oxidoreductase subunit 3, chloroplastic (120 aa).

Helical transmembrane passes span 10-30, 64-84, and 89-109; these read FWAFLLIASLVPVLAVGTSSL, MFALVFVVFDVETVFLYPWAM, and LGVLAFIEALVFVLVLIIGLV.

This sequence belongs to the complex I subunit 3 family. As to quaternary structure, NDH is composed of at least 16 different subunits, 5 of which are encoded in the nucleus.

The protein resides in the plastid. It is found in the chloroplast thylakoid membrane. It carries out the reaction a plastoquinone + NADH + (n+1) H(+)(in) = a plastoquinol + NAD(+) + n H(+)(out). It catalyses the reaction a plastoquinone + NADPH + (n+1) H(+)(in) = a plastoquinol + NADP(+) + n H(+)(out). In terms of biological role, NDH shuttles electrons from NAD(P)H:plastoquinone, via FMN and iron-sulfur (Fe-S) centers, to quinones in the photosynthetic chain and possibly in a chloroplast respiratory chain. The immediate electron acceptor for the enzyme in this species is believed to be plastoquinone. Couples the redox reaction to proton translocation, and thus conserves the redox energy in a proton gradient. The chain is NAD(P)H-quinone oxidoreductase subunit 3, chloroplastic from Zygnema circumcarinatum (Green alga).